The following is a 303-amino-acid chain: Porphobilinogen deaminase (303 aa).

Cys-240 is subject to S-(dipyrrolylmethanemethyl)cysteine.

The protein belongs to the HMBS family. As to quaternary structure, monomer. Dipyrromethane serves as cofactor.

The enzyme catalyses 4 porphobilinogen + H2O = hydroxymethylbilane + 4 NH4(+). The protein operates within porphyrin-containing compound metabolism; protoporphyrin-IX biosynthesis; coproporphyrinogen-III from 5-aminolevulinate: step 2/4. In terms of biological role, tetrapolymerization of the monopyrrole PBG into the hydroxymethylbilane pre-uroporphyrinogen in several discrete steps. This Stenotrophomonas maltophilia (strain K279a) protein is Porphobilinogen deaminase.